The chain runs to 317 residues: (2S)-3-sulfopropanediol dehydratase activating enzyme (317 aa).

A Radical SAM core domain is found at 18–306 (HDGPGLRTEL…QMLAEYFNQR (289 aa)). Positions 32, 36, 39, 58, 64, 67, 71, 92, 95, 98, and 102 each coordinate [4Fe-4S] cluster. Position 38–40 (38–40 (WCS)) interacts with S-adenosyl-L-methionine. 4Fe-4S ferredoxin-type domains lie at 49–82 (AQVGVYKTKCISYKKCAACEETCPQENILQFTRG) and 83–112 (KLTSIERHDCTNCLACHNACPSDAIKLWGK). Residues Gly142 and 191–193 (DIK) each bind S-adenosyl-L-methionine.

It belongs to the organic radical-activating enzymes family. The cofactor is [4Fe-4S] cluster.

It catalyses the reaction glycyl-[protein] + reduced [flavodoxin] + S-adenosyl-L-methionine = glycin-2-yl radical-[protein] + semiquinone [flavodoxin] + 5'-deoxyadenosine + L-methionine + H(+). It functions in the pathway organosulfur degradation; alkanesulfonate degradation. In terms of biological role, involved in the degradation of the organosulfur compound 2(S)-dihydroxypropanesulfonate (DHPS). Catalyzes activation of the (2S)-3-sulfopropanediol dehydratase HpfG under anaerobic conditions by generation of an organic free radical on a glycine residue. This chain is (2S)-3-sulfopropanediol dehydratase activating enzyme, found in Klebsiella oxytoca.